Consider the following 354-residue polypeptide: Membrane progestin receptor beta (354 aa).

Residues 1 to 76 (MTTAILERLS…FSLFQKHNEV (76 aa)) are Cytoplasmic-facing. A helical membrane pass occupies residues 77–97 (VNVWTHLLAALAVLLRFWAFV). The Extracellular segment spans residues 98–111 (EAGALQWASPHTLP). Residues 112-132 (LLLFILSSITYLTCSLLAHLL) traverse the membrane as a helical segment. Topologically, residues 133–173 (QSKSELSHYTFYFVDYVGVSVYQYGSALAHFFYSSDQAWYE) are cytoplasmic. The helical transmembrane segment at 174-194 (LFWIFFLPAAAFCGWLSCAGC) threads the bilayer. Topologically, residues 195–213 (CYAKYRYRRPYPVMRKICQ) are extracellular. Residues 214 to 234 (VVPAGLAFVLDISPVAHRVAL) traverse the membrane as a helical segment. The Cytoplasmic portion of the chain corresponds to 235–243 (CHLAGCQEQ). Residues 244–264 (AAWYHTLQILFFLVSAYFFSC) form a helical membrane-spanning segment. Residues 265–283 (PVPEKYFPGSCDIVGHGHQ) lie on the Extracellular side of the membrane. A helical membrane pass occupies residues 284 to 304 (IFHAFLSVCTLSQLEAILLDY). Residues 305 to 315 (QGRHEIFLQRH) lie on the Cytoplasmic side of the membrane. Residues 316–336 (GPLSVYSACLSFFVLAACSAA) form a helical membrane-spanning segment. Residues 337–354 (TATLLRHKVKDRLIKKDS) lie on the Extracellular side of the membrane.

Belongs to the ADIPOR family. Expressed in brain and testis.

Its subcellular location is the cell membrane. Its function is as follows. Plasma membrane progesterone (P4) receptor coupled to G proteins. Seems to act through a G(i) mediated pathway. May be involved in oocyte maturation. Also binds dehydroepiandrosterone (DHEA), pregnanolone, pregnenolone and allopregnanolone. The polypeptide is Membrane progestin receptor beta (Mus musculus (Mouse)).